Here is a 371-residue protein sequence, read N- to C-terminus: Protein-tyrosine sulfotransferase 2 (371 aa).

Residues 1-8 (MRVTMRRV) lie on the Cytoplasmic side of the membrane. A helical; Signal-anchor for type II membrane protein membrane pass occupies residues 9–25 (LLAVGSVVALMVTLHLG). Residues 26-371 (QQVLECQHVL…QVTQNTSSSH (346 aa)) lie on the Lumenal side of the membrane. A 3'-phosphoadenylyl sulfate-binding site is contributed by 76–80 (RSGTT). Cysteines 94 and 154 form a disulfide. The active-site Proton donor/acceptor is glutamate 97. Positions 99-103 (RIIPR) are interaction with peptide substrate. Residues arginine 181, serine 189, and arginine 193 each contribute to the 3'-phosphoadenylyl sulfate site. Cysteine 223 and cysteine 231 form a disulfide bridge. Residues tyrosine 236, 283–292 (STDQVIKPVN), and lysine 298 each bind 3'-phosphoadenylyl sulfate. Asparagine 341 and asparagine 366 each carry an N-linked (GlcNAc...) asparagine glycan.

The protein belongs to the protein sulfotransferase family.

Its subcellular location is the golgi apparatus membrane. The enzyme catalyses L-tyrosyl-[protein] + 3'-phosphoadenylyl sulfate = O-sulfo-L-tyrosine-[protein] + adenosine 3',5'-bisphosphate + H(+). Functionally, catalyzes the O-sulfation of tyrosine residues within acidic motifs of polypeptides, using 3'-phosphoadenylyl sulfate (PAPS) as cosubstrate. The sequence is that of Protein-tyrosine sulfotransferase 2 (TPST2) from Gallus gallus (Chicken).